The primary structure comprises 406 residues: Acetate kinase (406 aa).

Asn-7 contributes to the Mg(2+) binding site. Position 14 (Lys-14) interacts with ATP. Arg-90 contributes to the substrate binding site. The active-site Proton donor/acceptor is Asp-147. Residues 207 to 211, 283 to 285, and 331 to 335 contribute to the ATP site; these read HLGNG, DMR, and GVGEN. Glu-385 is a Mg(2+) binding site.

This sequence belongs to the acetokinase family. In terms of assembly, homodimer. Mg(2+) serves as cofactor. Mn(2+) is required as a cofactor.

Its subcellular location is the cytoplasm. The enzyme catalyses acetate + ATP = acetyl phosphate + ADP. The protein operates within metabolic intermediate biosynthesis; acetyl-CoA biosynthesis; acetyl-CoA from acetate: step 1/2. Catalyzes the formation of acetyl phosphate from acetate and ATP. Can also catalyze the reverse reaction. This chain is Acetate kinase, found in Thermosipho africanus (strain TCF52B).